The primary structure comprises 266 residues: Putative carbamate hydrolase RutD (266 aa).

Positions P14 to R116 constitute an AB hydrolase-1 domain.

This sequence belongs to the AB hydrolase superfamily. Hydrolase RutD family.

The enzyme catalyses carbamate + 2 H(+) = NH4(+) + CO2. Involved in pyrimidine catabolism. May facilitate the hydrolysis of carbamate, a reaction that can also occur spontaneously. The protein is Putative carbamate hydrolase RutD of Escherichia coli O81 (strain ED1a).